The primary structure comprises 624 residues: DNA damage response protein Mdb1 (624 aa).

Disordered regions lie at residues 177–237 (ERIP…DDES), 249–386 (GETK…KNKH), and 591–624 (IGKR…EQRT). Composition is skewed to basic and acidic residues over residues 200 to 217 (DEKL…HSSD) and 225 to 235 (EDQKQLNKTDD). Polar residues predominate over residues 250 to 263 (ETKSPSSVSQSLSG). Phosphoserine occurs at positions 253 and 283. Over residues 294-305 (NISDSSIKNNSI) the composition is skewed to low complexity. Composition is skewed to basic and acidic residues over residues 306–316 (HSDEVNPEVRP) and 325–352 (EESK…REAE). Polar residues predominate over residues 356–386 (ISTNYSFPSSSLEDQPDKNVQSSAVENKNKH). Positions 376–468 (QSSAVENKNK…KVLDFRSYKY (93 aa)) constitute a BRCT domain.

Homodimer. Interacts (via BRCT domain) with hta1 peptide containing the S/T-Q motif in vitro; this interaction requires phosphorylation of the hta1 peptide at the S/T-Q motif.

The protein resides in the nucleus. Its subcellular location is the chromosome. It localises to the cytoplasm. It is found in the cytoskeleton. The protein localises to the spindle. Its function is as follows. Involved in DNA damage response (DDR) mediated through its interaction with phosphorylated H2A proteins hta1 and hta2 which mark the discrete foci of DNA damage. The sequence is that of DNA damage response protein Mdb1 from Schizosaccharomyces pombe (strain 972 / ATCC 24843) (Fission yeast).